Consider the following 149-residue polypeptide: Protein AIM7 (149 aa).

Ser-2 is subject to N-acetylserine. Residues 3 to 147 (NLYKIGTETR…DVEELREQLE (145 aa)) enclose the ADF-H domain. Phosphoserine is present on Ser-137.

It belongs to the actin-binding proteins ADF family. GMF subfamily.

The protein localises to the cytoplasm. It localises to the nucleus. Its function is as follows. May be involved in mitochondrial organization and biogenesis. This chain is Protein AIM7 (AIM7), found in Saccharomyces cerevisiae (strain ATCC 204508 / S288c) (Baker's yeast).